The primary structure comprises 141 residues: Photosystem II protein PSBR, chloroplastic (141 aa).

A chloroplast-targeting transit peptide spans 1-27; sequence MATMQISAKGLAPLRPRVSSRRVVKPV. Phosphothreonine occurs at positions 34 and 37. Phosphoserine is present on Ser43. Residues 114–134 traverse the membrane as a helical segment; it reads GLIAWAGLVLVLLAVGVNLII.

This sequence belongs to the psbR family.

Its subcellular location is the plastid. The protein localises to the chloroplast thylakoid membrane. Its function is as follows. Associated with the oxygen-evolving complex of photosystem II (PSII). Is required for the stable binding of LHCSR3 to PSII-LHCII supercomplexes and is essential for efficient energy-dependent quenching and the integrity of the PSII-LHCII-LHCSR3 supercomplex under continuous high light. This is Photosystem II protein PSBR, chloroplastic from Chlamydomonas reinhardtii (Chlamydomonas smithii).